The primary structure comprises 395 residues: Thyroid hormone receptor beta (395 aa).

Residues 1–31 form a modulating region; that stretch reads MSEQADKCNSRWKDEAMQNGYIPSYLDKDEL. The segment at residues 29-106 is a DNA-binding region (nuclear receptor); the sequence is DELCVVCGDK…VGMATDLVLD (78 aa). Residues C32, C35, C49, C52, C70, C76, C86, and C89 each contribute to the Zn(2+) site. 2 consecutive NR C4-type zinc fingers follow at residues 32-52 and 70-89; these read CVVCGDKATGYHYRCITCEGC and CKYEGKCVIDKVTRNQCQEC. Positions 142–395 constitute an NR LBD domain; the sequence is EEWEMIRVVT…PPLFLEVFED (254 aa). Residues R216, N265, and H369 each coordinate 3,3',5-triiodo-L-thyronine.

This sequence belongs to the nuclear hormone receptor family. NR1 subfamily. As to quaternary structure, interacts (via the ligand-binding domain) with ncoa2. Widely expressed in a range of adult tissues including the brain, eye, fin, gill, intestine, liver, swim bladder and ovary. In the eye, expressed in the outer nuclear layer of the retina.

It localises to the nucleus. Nuclear hormone receptor that can act as a repressor or activator of transcription. High affinity receptor for the thyroid gland hormone triiodothyronine (T3). Transactivating activity is ligand-dependent, and is repressed in the absence of T3. The polypeptide is Thyroid hormone receptor beta (thrb) (Danio rerio (Zebrafish)).